Consider the following 266-residue polypeptide: Transcription factor atoh8 (266 aa).

Positions 140–164 (AASQAPAGGSERAESPRKRAGEPSG) are disordered. The span at 150 to 160 (ERAESPRKRAG) shows a compositional bias: basic and acidic residues. The segment at 175–188 (TRRLLANARERTRV) is basic motif; degenerate. Residues 175-227 (TRRLLANARERTRVHTISAAFEALRKQVPCYSYGQKLSKLAILRIACNYILSL) form the bHLH domain. The helix-loop-helix motif stretch occupies residues 189–227 (HTISAAFEALRKQVPCYSYGQKLSKLAILRIACNYILSL).

Its subcellular location is the nucleus. The protein resides in the nucleus speckle. It is found in the cytoplasm. Transcription factor that binds a palindromic (canonical) core consensus DNA sequence 5'-CANNTG- 3' known as an E-box element, possibly as a heterodimer with other bHLH proteins. During development, is required for heart looping and swim bladder formation by acting in concert with GATA4 and ZFPM1. During the development of both the retina and skeletal muscles is required for neural retinal cell through modulating PAX6 and NEUROG3 expression and myogenic differentiation. In Danio rerio (Zebrafish), this protein is Transcription factor atoh8.